A 1172-amino-acid polypeptide reads, in one-letter code: Thrombospondin-2 (1172 aa).

The first 18 residues, 1–18, serve as a signal peptide directing secretion; the sequence is MLWALALLALGIGPRASA. The Laminin G-like domain occupies 19–215; the sequence is GDHVKDTSFD…LQNVHLVFAD (197 aa). Residues 19–232 are heparin-binding; the sequence is GDHVKDTSFD…KKGCQHSQGA (214 aa). 3 N-linked (GlcNAc...) asparagine glycosylation sites follow: N151, N316, and N330. Positions 318 to 375 constitute a VWFC domain; the sequence is SACVQEGRIFAENETWVVDSCTTCTCKKFKTVCHQITCSPATCANPSFVEGECCPSCS. TSP type-1 domains lie at 381-431, 437-492, and 494-549; these read DEGW…GKCD, NGGW…DPCP, and DGRW…RSCP. 27 cysteine pairs are disulfide-bonded: C393–C425, C397–C430, C408–C415, C449–C486, C453–C491, C464–C476, C506–C543, C510–C548, C521–C533, C553–C564, C558–C574, C577–C588, C594–C610, C601–C619, C622–C646, C652–C665, C659–C678, C680–C691, C707–C715, C720–C740, C756–C776, C779–C799, C815–C835, C838–C858, C876–C896, C912–C932, and C948–C1169. N457 is a glycosylation site (N-linked (GlcNAc...) asparagine). The EGF-like 1 domain occupies 549–589; sequence PIDGCLSNPCFPGAKCNSFPDGSWSCGSCPVGFLGNGTHCE. N-linked (GlcNAc...) asparagine glycosylation occurs at N584. An EGF-like 2 domain is found at 648–692; sequence PENPCKDKTHSCHKNAECIYLGHFSDPMYKCECQIGYAGDGLICG. TSP type-3 repeat units follow at residues 693 to 728, 729 to 764, 765 to 787, 788 to 823, 824 to 846, 847 to 884, 885 to 920, and 921 to 956; these read EDSD…NSGQ, EDFD…NPRQ, LDYD…NPAQ, IDTD…NTDQ, RDTD…NPDQ, IDQD…NSNQ, ADHD…NPDQ, and EDSD…AITE. A glycan (N-linked (GlcNAc...) asparagine) is linked at N710. A disordered region spans residues 727-752; sequence GQEDFDKDGIGDACDEDDDNDGVSDE. Positions 739 to 749 are enriched in acidic residues; the sequence is ACDEDDDNDGV. Positions 846 to 938 are disordered; sequence QIDQDNDLVG…GDICKDDFDN (93 aa). Positions 847-866 are enriched in acidic residues; it reads IDQDNDLVGDQCDNNEDIDD. Residues 870 to 884 show a composition bias toward polar residues; the sequence is QNNQDNCPYISNSNQ. Residues 885–895 are compositionally biased toward basic and acidic residues; sequence ADHDNDGKGDA. Acidic residues predominate over residues 896-905; sequence CDSDDDNDGV. Over residues 925–935 the composition is skewed to basic and acidic residues; that stretch reads GDGRGDICKDD. A Cell attachment site motif is present at residues 928-930; sequence RGD. Residues 960–1172 enclose the TSP C-terminal domain; it reads RNFQMVPLDP…SDLKYECRDA (213 aa). N-linked (GlcNAc...) asparagine glycosylation is present at N1069.

The protein belongs to the thrombospondin family. Homotrimer; disulfide-linked. Can bind to fibrinogen, fibronectin, laminin and type V collagen. Interacts (via the TSP type I repeats) with CD36; the interaction conveys an antiangiogenic effect. Interacts (via the TSP type I repeats) with HRG; the interaction blocks the antiangiogenic effect of THBS2 with CD36. Can bind to fibrinogen, fibronectin, laminin.

In terms of biological role, adhesive glycoprotein that mediates cell-to-cell and cell-to-matrix interactions. Ligand for CD36 mediating antiangiogenic properties. This is Thrombospondin-2 (Thbs2) from Mus musculus (Mouse).